The chain runs to 493 residues: Transcript termination protein OPG145 (493 aa).

In terms of domain architecture, Helicase ATP-binding spans 100–256; the sequence is MIESKRPLYI…NSIINIAKLS (157 aa). ATP is bound at residue 113-120; that stretch reads LACGFGKT. Residues 206–209 carry the DESH box motif; it reads DESH. The Helicase C-terminal domain occupies 309 to 456; sequence ILDTLVEEFK…IISLSVDKLG (148 aa).

The protein belongs to the helicase family. Poxviruses subfamily. Interacts with OPG087. Might be part of a transcription complex composed at least of OPG087, OPG110, and OPG145.

The protein resides in the virion. In terms of biological role, DNA helicase which seems to act as a postreplicative transcription termination factor. Involved in ATP-dependent release of nascent RNA. Forms a stable complex with single-stranded DNA, and to a lesser extent RNA. The polypeptide is Transcript termination protein OPG145 (OPG145) (Homo sapiens (Human)).